The following is a 208-amino-acid chain: Uracil phosphoribosyltransferase (208 aa).

5-phospho-alpha-D-ribose 1-diphosphate-binding positions include Arg78, Arg103, and 130 to 138 (DPMLATGGS). Uracil-binding positions include Ile193 and 198–200 (GDA). Residue Asp199 participates in 5-phospho-alpha-D-ribose 1-diphosphate binding.

This sequence belongs to the UPRTase family. Mg(2+) serves as cofactor.

It catalyses the reaction UMP + diphosphate = 5-phospho-alpha-D-ribose 1-diphosphate + uracil. It participates in pyrimidine metabolism; UMP biosynthesis via salvage pathway; UMP from uracil: step 1/1. Allosterically activated by GTP. Functionally, catalyzes the conversion of uracil and 5-phospho-alpha-D-ribose 1-diphosphate (PRPP) to UMP and diphosphate. The protein is Uracil phosphoribosyltransferase of Photorhabdus laumondii subsp. laumondii (strain DSM 15139 / CIP 105565 / TT01) (Photorhabdus luminescens subsp. laumondii).